A 718-amino-acid polypeptide reads, in one-letter code: Interleukin-1 receptor-associated kinase 1 (718 aa).

One can recognise a Death domain in the interval 27–106; it reads MCRFYKVMDA…DIITAWHPPA (80 aa). A Phosphothreonine; by PKC/PRKCI modification is found at Thr-66. Positions 110–211 are proST region; it reads PPSTTSLTPS…LHEICQGTHD (102 aa). Residue Lys-134 forms a Glycyl lysine isopeptide (Lys-Gly) (interchain with G-Cter in ubiquitin) linkage. Residues 146 to 188 form a disordered region; it reads AFPGSQTHSDPELCPGPSPAAHQPPLPSPAPSSTKPSPESPMS. Residues 159–175 show a composition bias toward pro residues; sequence CPGPSPAAHQPPLPSPA. Residues 176-188 are compositionally biased toward low complexity; the sequence is PSSTKPSPESPMS. A Glycyl lysine isopeptide (Lys-Gly) (interchain with G-Cter in ubiquitin) cross-link involves residue Lys-180. A Phosphothreonine; by IRAK4 modification is found at Thr-209. The Protein kinase domain occupies 212–521; that stretch reads FSEELKIGEG…TQVYQTLEEL (310 aa). ATP is bound by residues 218 to 226 and Lys-239; that span reads IGEGGFGCV. Asp-340 acts as the Proton acceptor in catalysis. Residues 342-345 and Asp-358 contribute to the ATP site; that span reads KSSN. A Phosphoserine modification is found at Ser-375. Phosphothreonine is present on Thr-387. The disordered stretch occupies residues 534-554; it reads AASRSPPSPQENSYVSTSGSA. Residues 543-554 are compositionally biased toward polar residues; that stretch reads QENSYVSTSGSA. Position 556 is a phosphoserine (Ser-556). Disordered regions lie at residues 569–594, 631–662, and 692–718; these read GAQA…SVSD, GAAR…SSRP, and LSSS…EFRS. A compositionally biased stretch (low complexity) spans 692 to 703; the sequence is LSSSSLPDSGQD. Basic and acidic residues predominate over residues 704–718; that stretch reads LQDRQGPEERDEFRS.

Belongs to the protein kinase superfamily. TKL Ser/Thr protein kinase family. Pelle subfamily. Homodimer. Forms a complex with TRAF6, PELI1, IRAK4 and MYD88. Direct binding of SMAD6 to PELI1 prevents complex formation and hence negatively regulates IL1R-TLR signaling and eventually NF-kappa-B-mediated gene expression. The TRAF6-PELI1-IRAK1-IRAK4-MYD88 complex recruits MAP3K7/TAK1, TAB1 and TAB2 to mediate NF-kappa-B activation. Interaction with MYD88 recruits IRAK1 to the stimulated receptor complex. Interacts with TOLLIP; this interaction occurs in the cytosol prior to receptor activation. Interacts with IL1RL1. Interacts (when polyubiquitinated) with IKBKG/NEMO. Interacts with RSAD2/viperin. Interacts with IRAK1BP1. Interacts with PELI2. Interacts with ZC3H12A; this interaction increases the interaction between ZC3H12A and IKBKB/IKKB. Interacts with IRAK4. Interacts with PELI3. Interacts with PELI1 and TRAF6. Interacts with INAVA; the interaction takes place upon PRR stimulation. Interacts (via C-terminus) with NFATC4 (via N-terminus). The cofactor is Mg(2+). Post-translationally, following recruitment on the activated receptor complex, phosphorylated on Thr-209, probably by IRAK4, resulting in a conformational change of the kinase domain, allowing further phosphorylations to take place. Thr-387 phosphorylation in the activation loop is required to achieve full enzymatic activity. In terms of processing, polyubiquitinated by TRAF6 after cell stimulation with IL-1-beta by PELI1, PELI2 and PELI3. Polyubiquitination occurs with polyubiquitin chains linked through 'Lys-63'. Ubiquitination promotes interaction with NEMO/IKBKG. Also sumoylated; leading to nuclear translocation.

Its subcellular location is the cytoplasm. It is found in the nucleus. The protein resides in the lipid droplet. The enzyme catalyses L-seryl-[protein] + ATP = O-phospho-L-seryl-[protein] + ADP + H(+). It catalyses the reaction L-threonyl-[protein] + ATP = O-phospho-L-threonyl-[protein] + ADP + H(+). Functionally, serine/threonine-protein kinase that plays a critical role in initiating innate immune response against foreign pathogens. Involved in Toll-like receptor (TLR) and IL-1R signaling pathways. Is rapidly recruited by MYD88 to the receptor-signaling complex upon TLR activation. Association with MYD88 leads to IRAK1 phosphorylation by IRAK4 and subsequent autophosphorylation and kinase activation. Phosphorylates E3 ubiquitin ligases Pellino proteins (PELI1, PELI2 and PELI3) to promote pellino-mediated polyubiquitination of IRAK1. Then, the ubiquitin-binding domain of IKBKG/NEMO binds to polyubiquitinated IRAK1 bringing together the IRAK1-MAP3K7/TAK1-TRAF6 complex and the NEMO-IKKA-IKKB complex. In turn, MAP3K7/TAK1 activates IKKs (CHUK/IKKA and IKBKB/IKKB) leading to NF-kappa-B nuclear translocation and activation. Alternatively, phosphorylates TIRAP to promote its ubiquitination and subsequent degradation. Phosphorylates the interferon regulatory factor 7 (IRF7) to induce its activation and translocation to the nucleus, resulting in transcriptional activation of type I IFN genes, which drive the cell in an antiviral state. When sumoylated, translocates to the nucleus and phosphorylates STAT3. The polypeptide is Interleukin-1 receptor-associated kinase 1 (IRAK1) (Bos taurus (Bovine)).